Consider the following 309-residue polypeptide: Ras-like protein 1 (309 aa).

Residues 20–25 (GVGKSA), 36–42 (VDEYDPT), 66–67 (AG), 123–126 (NKLD), and 153–155 (SAK) contribute to the GTP site. The Effector region signature appears at 39-47 (YDPTIEDSY). The interval 177-303 (KYNSMNRQLD…SANARKESSG (127 aa)) is disordered. Composition is skewed to polar residues over residues 179-188 (NSMNRQLDNT) and 209-235 (NGSY…NHNG). Residues 236-245 (ETTKRTDEKN) are compositionally biased toward basic and acidic residues. A compositionally biased stretch (low complexity) spans 246–256 (YVNQNNNNEGN). Over residues 257–296 (TKYSSNGNGNRSDISRGNQNNALNSRSKQSAEPQKNSSAN) the composition is skewed to polar residues. C305 carries S-palmitoyl cysteine lipidation. The residue at position 306 (C306) is a Cysteine methyl ester. C306 carries the S-farnesyl cysteine lipid modification. A propeptide spans 307 to 309 (IIC) (removed in mature form).

It belongs to the small GTPase superfamily. Ras family. Farnesylated by RAM1-RAM2, which is required for targeting RAS1 to the cytoplasmic site of the endoplasmic reticulum, where proteolytic processing of the C-terminus by RCE1 and methylation of the resulting carboxyl group by STE14 occurs. Post-translationally, palmitoylated by the ERF2-SHR5 complex, which is required for proper plasma membrane localization of RAS1.

Its subcellular location is the cell membrane. It catalyses the reaction GTP + H2O = GDP + phosphate + H(+). Alternates between an inactive form bound to GDP and an active form bound to GTP. Activated by guanine nucleotide-exchange factor (GEF) CDC25 and inactivated by GTPase-activating proteins (GAPs) IRA1 and IRA2. In terms of biological role, the S.cerevisiae Ras proteins modulate the activity of the adenylate cyclase catalytic subunit and therefore affect the biosynthesis of cyclic-AMP. This Saccharomyces cerevisiae (strain ATCC 204508 / S288c) (Baker's yeast) protein is Ras-like protein 1 (RAS1).